We begin with the raw amino-acid sequence, 264 residues long: S-adenosylmethionine decarboxylase proenzyme (264 aa).

Catalysis depends on Ser-112, which acts as the Schiff-base intermediate with substrate; via pyruvic acid. The residue at position 112 (Ser-112) is a Pyruvic acid (Ser); by autocatalysis. His-117 functions as the Proton acceptor; for processing activity in the catalytic mechanism. The active-site Proton donor; for catalytic activity is the Cys-140.

This sequence belongs to the prokaryotic AdoMetDC family. Type 2 subfamily. Heterooctamer of four alpha and four beta chains arranged as a tetramer of alpha/beta heterodimers. Pyruvate serves as cofactor. Post-translationally, is synthesized initially as an inactive proenzyme. Formation of the active enzyme involves a self-maturation process in which the active site pyruvoyl group is generated from an internal serine residue via an autocatalytic post-translational modification. Two non-identical subunits are generated from the proenzyme in this reaction, and the pyruvate is formed at the N-terminus of the alpha chain, which is derived from the carboxyl end of the proenzyme. The post-translation cleavage follows an unusual pathway, termed non-hydrolytic serinolysis, in which the side chain hydroxyl group of the serine supplies its oxygen atom to form the C-terminus of the beta chain, while the remainder of the serine residue undergoes an oxidative deamination to produce ammonia and the pyruvoyl group blocking the N-terminus of the alpha chain.

It catalyses the reaction S-adenosyl-L-methionine + H(+) = S-adenosyl 3-(methylsulfanyl)propylamine + CO2. It functions in the pathway amine and polyamine biosynthesis; S-adenosylmethioninamine biosynthesis; S-adenosylmethioninamine from S-adenosyl-L-methionine: step 1/1. In terms of biological role, catalyzes the decarboxylation of S-adenosylmethionine to S-adenosylmethioninamine (dcAdoMet), the propylamine donor required for the synthesis of the polyamines spermine and spermidine from the diamine putrescine. This chain is S-adenosylmethionine decarboxylase proenzyme, found in Enterobacter sp. (strain 638).